A 197-amino-acid chain; its full sequence is Holliday junction branch migration complex subunit RuvA (197 aa).

The tract at residues 1–63 (MYAYLKGIIT…EDAHLLYGFR (63 aa)) is domain I. The domain II stretch occupies residues 64–142 (SEDEKKLFLS…VAGDGLPAKV (79 aa)). The tract at residues 143 to 147 (AVQAS) is flexible linker. The tract at residues 148–197 (AENQELEEAMEAMLALGYKATELKKIKKFFEGTTDTAENYIKSALKMLVK) is domain III.

Belongs to the RuvA family. Homotetramer. Forms an RuvA(8)-RuvB(12)-Holliday junction (HJ) complex. HJ DNA is sandwiched between 2 RuvA tetramers; dsDNA enters through RuvA and exits via RuvB. An RuvB hexamer assembles on each DNA strand where it exits the tetramer. Each RuvB hexamer is contacted by two RuvA subunits (via domain III) on 2 adjacent RuvB subunits; this complex drives branch migration. In the full resolvosome a probable DNA-RuvA(4)-RuvB(12)-RuvC(2) complex forms which resolves the HJ.

The protein localises to the cytoplasm. The RuvA-RuvB-RuvC complex processes Holliday junction (HJ) DNA during genetic recombination and DNA repair, while the RuvA-RuvB complex plays an important role in the rescue of blocked DNA replication forks via replication fork reversal (RFR). RuvA specifically binds to HJ cruciform DNA, conferring on it an open structure. The RuvB hexamer acts as an ATP-dependent pump, pulling dsDNA into and through the RuvAB complex. HJ branch migration allows RuvC to scan DNA until it finds its consensus sequence, where it cleaves and resolves the cruciform DNA. The protein is Holliday junction branch migration complex subunit RuvA of Streptococcus pneumoniae serotype 2 (strain D39 / NCTC 7466).